The primary structure comprises 725 residues: FYVE, RhoGEF and PH domain-containing protein 3 (725 aa).

The disordered stretch occupies residues M1–Q151. Residues E124–S136 show a composition bias toward acidic residues. Position 128 is a phosphoserine (S128). A DH domain is found at K157–A341. The PH 1 domain maps to E370–E469. Residues Q487 to D532 are disordered. The segment covering T500 to E512 has biased composition (low complexity). Residues E521–D532 are compositionally biased toward basic and acidic residues. The segment at D532–P588 adopts an FYVE-type zinc-finger fold. The Zn(2+) site is built by C538, C541, C555, C558, C563, C566, C580, and C583. One can recognise a PH 2 domain in the interval P604 to H703. Positions H703–P725 are disordered.

It localises to the cytoplasm. The protein resides in the cytoskeleton. In terms of biological role, promotes the formation of filopodia. May activate CDC42, a member of the Ras-like family of Rho- and Rac proteins, by exchanging bound GDP for free GTP. Plays a role in regulating the actin cytoskeleton and cell shape. This is FYVE, RhoGEF and PH domain-containing protein 3 (FGD3) from Homo sapiens (Human).